We begin with the raw amino-acid sequence, 452 residues long: Coiled-coil domain-containing protein 71 (452 aa).

The tract at residues 81-106 (PSQTKLQARAPTPAATSPPASAPQTA) is disordered. The segment covering 87–106 (QARAPTPAATSPPASAPQTA) has biased composition (low complexity). A Phosphoserine modification is found at Ser129. 2 disordered regions span residues 209 to 256 (PLKV…GLQS) and 322 to 404 (AREV…LGPG). Positions 279–344 (KAAQAKAACA…QAKAKVARTQ (66 aa)) form a coiled coil. The segment covering 332–344 (KAVQAKAKVARTQ) has biased composition (low complexity). The segment covering 377–386 (RTEEAKDLSP) has biased composition (basic and acidic residues).

The sequence is that of Coiled-coil domain-containing protein 71 (CCDC71) from Bos taurus (Bovine).